Reading from the N-terminus, the 430-residue chain is Gamma-glutamyl phosphate reductase (430 aa).

It belongs to the gamma-glutamyl phosphate reductase family.

The protein resides in the cytoplasm. It carries out the reaction L-glutamate 5-semialdehyde + phosphate + NADP(+) = L-glutamyl 5-phosphate + NADPH + H(+). The protein operates within amino-acid biosynthesis; L-proline biosynthesis; L-glutamate 5-semialdehyde from L-glutamate: step 2/2. Catalyzes the NADPH-dependent reduction of L-glutamate 5-phosphate into L-glutamate 5-semialdehyde and phosphate. The product spontaneously undergoes cyclization to form 1-pyrroline-5-carboxylate. The protein is Gamma-glutamyl phosphate reductase of Rhodopseudomonas palustris (strain TIE-1).